The primary structure comprises 164 residues: Zinc finger A20 and AN1 domain-containing stress-associated protein 1 (164 aa).

The segment at 16–50 (APEITLCANSCGFPGNPATQNLCQNCFLAATASTS) adopts an A20-type zinc-finger fold. 4 residues coordinate Zn(2+): cysteine 22, cysteine 26, cysteine 38, and cysteine 41. Residues 48–58 (STSSPSSLSSP) are compositionally biased toward low complexity. Positions 48–81 (STSSPSSLSSPVLDKQPPRPAAPLVEPQAPLPPP) are disordered. Residues 99 to 145 (TSAVNRCSRCRKRVGLTGFRCRCGHLFCGEHRYSDRHGCSYDYKSAA) form an AN1-type zinc finger. Cysteine 105, cysteine 108, cysteine 119, cysteine 121, cysteine 126, histidine 129, histidine 135, and cysteine 137 together coordinate Zn(2+).

May be involved in environmental stress response. The sequence is that of Zinc finger A20 and AN1 domain-containing stress-associated protein 1 (SAP1) from Oryza sativa subsp. indica (Rice).